A 236-amino-acid chain; its full sequence is MPRKHLIASGINKKQQQQAKIWMKCAKEIKAAAKMGGPNPEANSRLKVAIERALNNNLSRDSIERNINGASKDIDNLKELTYEGYGPNGLAIIVRALTDNEQRTISAIRGYFSKLQGQIAKPNSVSMLFNECGQLLINKETKSLDEWFEILIDQSIIDINEDDKIIEILVKPEDFSTVKLILEKNNADIKSAEIKLIPNDFISLDEYARERLVRFVNACENDDDISWVITNYEEEL.

It belongs to the TACO1 family.

Its subcellular location is the cytoplasm. This Ureaplasma parvum serovar 3 (strain ATCC 700970) protein is Probable transcriptional regulatory protein UU295.